The following is a 100-amino-acid chain: MEINIIEEKENPLLNRKEIRFECLYEGESTPKVLEVKNKLVAMLDADKDLLVVDKIDQGFGEPRATGYAKIYESAEKLTEIEPEHVIKKNTEASEEEEEE.

Belongs to the eukaryotic ribosomal protein eS24 family.

The polypeptide is Small ribosomal subunit protein eS24 (Methanothermobacter thermautotrophicus (strain ATCC 29096 / DSM 1053 / JCM 10044 / NBRC 100330 / Delta H) (Methanobacterium thermoautotrophicum)).